Consider the following 444-residue polypeptide: MSNTILQHLPIGQKVGIAFSGGLDTSAALLWMRQKGAVPYAYTANLGQPDEEDYNAIPRKAMEYGAEKARLIDCRNQLAHEGIAAIQCGAFHISTGGVTYFNTTPLGRAVTGTMLVSAMKEDDVNIWGDGSTFKGNDIERFYRYGLLTNPSLRIYKPWLDNQFIDELGGRQEMSEFLIANGFDYKMSVEKAYSTDSNMLGATHEAKDLEYLNSGIRIVKPIMGVAFWRDDVTVKAEEVTVGFEDGVPVTLNGQSFSSAVELFLEANRIGGRHGLGMSDQIENRIIEAKSRGIYEAPGMALLHIAYERLVTAIHNEDTIEQYRINGLRLGRLLYQGRWFDPQALMLRETAQRWVARAVTGEVTLELRRGNDYSILNTVSPNMTYHPERLSMEKVENAPFDPSDRIGQLTMRNLDITDTRDKLGIYTHTGLLTVGKDSMLPQLDKK.

ATP is bound by residues Ala18–Ser26 and Ala44. Tyr100 contributes to the L-citrulline binding site. Residues Gly130 and Thr132 each coordinate ATP. 3 residues coordinate L-aspartate: Thr132, Asn136, and Asp137. L-citrulline is bound at residue Asn136. Asp137 contributes to the ATP binding site. The L-citrulline site is built by Arg140 and Ser193. Residue Asp195 participates in ATP binding. L-citrulline contacts are provided by Thr202, Glu204, and Glu281.

The protein belongs to the argininosuccinate synthase family. Type 2 subfamily. In terms of assembly, homotetramer.

The protein resides in the cytoplasm. The enzyme catalyses L-citrulline + L-aspartate + ATP = 2-(N(omega)-L-arginino)succinate + AMP + diphosphate + H(+). The protein operates within amino-acid biosynthesis; L-arginine biosynthesis; L-arginine from L-ornithine and carbamoyl phosphate: step 2/3. The sequence is that of Argininosuccinate synthase from Histophilus somni (strain 129Pt) (Haemophilus somnus).